A 515-amino-acid polypeptide reads, in one-letter code: Maturase K (515 aa).

The protein belongs to the intron maturase 2 family. MatK subfamily.

It is found in the plastid. It localises to the chloroplast. In terms of biological role, usually encoded in the trnK tRNA gene intron. Probably assists in splicing its own and other chloroplast group II introns. This Pinus densiflora (Japanese red pine) protein is Maturase K.